The primary structure comprises 730 residues: Elongation factor 2 (730 aa).

Residues 19 to 260 (KFIRNIGIVA…MVVKHLPDPF (242 aa)) enclose the tr-type G domain. GTP is bound by residues 28–35 (AHIDHGKT), 94–98 (DTPGH), and 148–151 (NKVD). H597 is modified (diphthamide).

This sequence belongs to the TRAFAC class translation factor GTPase superfamily. Classic translation factor GTPase family. EF-G/EF-2 subfamily.

The protein resides in the cytoplasm. Catalyzes the GTP-dependent ribosomal translocation step during translation elongation. During this step, the ribosome changes from the pre-translocational (PRE) to the post-translocational (POST) state as the newly formed A-site-bound peptidyl-tRNA and P-site-bound deacylated tRNA move to the P and E sites, respectively. Catalyzes the coordinated movement of the two tRNA molecules, the mRNA and conformational changes in the ribosome. The chain is Elongation factor 2 from Methanosphaerula palustris (strain ATCC BAA-1556 / DSM 19958 / E1-9c).